Reading from the N-terminus, the 390-residue chain is Neuromedin-B receptor (390 aa).

Over residues 1–19 the composition is skewed to polar residues; the sequence is MPSKSLSNLSVTTGANESG. The tract at residues 1-22 is disordered; that stretch reads MPSKSLSNLSVTTGANESGSVP. The Extracellular segment spans residues 1 to 41; that stretch reads MPSKSLSNLSVTTGANESGSVPEGWERDFLPASDGTTTELV. Asparagine 8 and asparagine 16 each carry an N-linked (GlcNAc...) asparagine glycan. A helical membrane pass occupies residues 42 to 65; it reads IRCVIPSLYLLIITVGLLGNIMLV. Residues 66–79 are Cytoplasmic-facing; sequence KIFITNSAMRSVPN. A helical membrane pass occupies residues 80–99; it reads IFISNLAAGDLLLLLTCVPV. The Extracellular portion of the chain corresponds to 100 to 117; sequence DASRYFFDEWMFGKVGCK. A disulfide bridge connects residues cysteine 116 and cysteine 198. The helical transmembrane segment at 118–139 threads the bilayer; that stretch reads LIPVIQLTSVGVSVFTLTALSA. The Cytoplasmic segment spans residues 140–156; it reads DRYRAIVNPMDMQTSGA. A helical transmembrane segment spans residues 157–177; sequence LLRTCVKAMGIWVVSVLLAVP. The Extracellular portion of the chain corresponds to 178–211; that stretch reads EAVFSEVARISSLDNSSFTACIPYPQTDELHPKI. N-linked (GlcNAc...) asparagine glycosylation occurs at asparagine 192. The helical transmembrane segment at 212-235 threads the bilayer; that stretch reads HSVLIFLVYFLIPLAIISIYYYHI. Residues 236–266 lie on the Cytoplasmic side of the membrane; that stretch reads AKTLIKSAHNLPGEYNEHTKKQMETRKRLAK. The helical transmembrane segment at 267–287 threads the bilayer; the sequence is IVLVFVGCFIFCWFPNHILYM. Over 288–299 the chain is Extracellular; that stretch reads YRSFNYNEIDPS. A helical transmembrane segment spans residues 300-327; it reads LGHMIVTLVARVLSFGNSCVNPFALYLL. Residues 328 to 390 lie on the Cytoplasmic side of the membrane; sequence SESFRRHFNS…GHSMKQEMAL (63 aa). Cysteine 341 carries the S-palmitoyl cysteine lipid modification. Serine 352 carries the phosphoserine modification.

It belongs to the G-protein coupled receptor 1 family. Expressed in epididymis (at protein level).

The protein resides in the cell membrane. Receptor for neuromedin-B. Contributes to the maintenance of basal sigh rate through signaling in the pre-Botzinger complex, a cluster of several thousand neurons in the ventrolateral medulla responsible for inspiration during respiratory activity. Contributes to the induction of sneezing following exposure to chemical irritants or allergens which causes release of NMB by nasal sensory neurons and activation of NMBR-expressing neurons in the sneeze-evoking region of the brainstem. These in turn activate neurons of the caudal ventral respiratory group, giving rise to the sneezing response. Contributes to induction of acute itch, possibly through its activation on dorsal root ganglion neurons by the NMB peptide. Plays a role in the innate immune response to influenza A virus infection by enhancing interferon alpha expression and reducing expression of IL6. Plays a role in CSF1-induced proliferation of osteoclast precursors by contributing to the positive regulation of the expression of the CSF1 receptor CSF1R. The sequence is that of Neuromedin-B receptor (NMBR) from Homo sapiens (Human).